We begin with the raw amino-acid sequence, 263 residues long: Probable esterase PIR7A (263 aa).

The Acyl-ester intermediate role is filled by serine 82. Active-site charge relay system residues include aspartate 213 and histidine 241.

It belongs to the AB hydrolase superfamily.

The protein is Probable esterase PIR7A (PIR7A) of Oryza sativa subsp. indica (Rice).